A 693-amino-acid polypeptide reads, in one-letter code: Triadin (693 aa).

Over 1 to 47 (MTEITAEGNASTTTTVIDNKNGCIPKSPGKVLKRSVTEDIVTTFSSP) the chain is Cytoplasmic. Residues 48–68 (AAWLLVIALIITWSAVAIVMF) form a helical membrane-spanning segment. Topologically, residues 69–693 (DLVDYKNFSA…NSPGQKQQEQ (625 aa)) are lumenal. The span at 117-130 (EGDEDDEDADEDID) shows a compositional bias: acidic residues. 3 disordered regions span residues 117–260 (EGDE…AVHE), 278–649 (GDLK…QTRP), and 666–693 (FQFP…QQEQ). Composition is skewed to basic and acidic residues over residues 131 to 241 (KGEI…KETP) and 249 to 260 (KKDDKEMPAVHE). A Phosphoserine modification is found at Ser301. Residues 305–352 (LEEKEKEEKKKMEKKDTSDTKKKEKEVKKKSEETTIDGKGKEPGKPPE) are compositionally biased toward basic and acidic residues. Polar residues predominate over residues 354 to 364 (KQMTAKLTTQA). Composition is skewed to basic and acidic residues over residues 366 to 427 (ARKD…KEEI) and 438 to 502 (GKKE…KEAK). The N-linked (GlcNAc...) asparagine glycan is linked to Asn515. Basic and acidic residues-rich tracts occupy residues 526–547 (VKPE…DKPK) and 558–579 (DSGK…REEN). An N-linked (GlcNAc...) asparagine glycan is attached at Asn584. Basic and acidic residues predominate over residues 587–637 (KAEKPGKIPKDSKEAPASKKDKEDSKEAPTSKKDKEDSKDVPHSKKDKEVT). Residues 672–693 (PVQQPGENPGKTNSPGQKQQEQ) show a composition bias toward polar residues.

In terms of assembly, homooligomer of variable subunit number; disulfide-linked. Interacts with CASQ1 and RYR1 in skeletal muscle. Interacts with CASQ2. Post-translationally, phosphorylated by CaMK2. In terms of processing, N-glycosylated. Detected in heart (at protein level). Detected in heart.

It localises to the sarcoplasmic reticulum membrane. Its function is as follows. Contributes to the regulation of lumenal Ca2+ release via the sarcoplasmic reticulum calcium release channels RYR1 and RYR2, a key step in triggering skeletal and heart muscle contraction. Required for normal organization of the triad junction, where T-tubules and the sarcoplasmic reticulum terminal cisternae are in close contact. Required for normal skeletal muscle strength. Plays a role in excitation-contraction coupling in the heart and in regulating the rate of heart beats. This chain is Triadin, found in Mus musculus (Mouse).